Reading from the N-terminus, the 119-residue chain is Large ribosomal subunit protein bL19c (119 aa).

The protein belongs to the bacterial ribosomal protein bL19 family.

Its subcellular location is the plastid. It localises to the chloroplast. The protein is Large ribosomal subunit protein bL19c of Mesostigma viride (Green alga).